The sequence spans 218 residues: Cytochrome b6 (218 aa).

A helical membrane pass occupies residues 35-55; it reads IFYCLGGITLVCFLIQFATGF. Residue C38 participates in heme c binding. Heme b contacts are provided by H89 and H103. The next 3 membrane-spanning stretches (helical) occupy residues 93 to 113, 119 to 139, and 189 to 209; these read ASMM…TGGF, LTWV…VTGY, and LHTF…FLMI. The heme b site is built by H190 and H205.

The protein belongs to the cytochrome b family. PetB subfamily. In terms of assembly, the 4 large subunits of the cytochrome b6-f complex are cytochrome b6, subunit IV (17 kDa polypeptide, PetD), cytochrome f and the Rieske protein, while the 4 small subunits are PetG, PetL, PetM and PetN. The complex functions as a dimer. The cofactor is heme b. It depends on heme c as a cofactor.

It localises to the cellular thylakoid membrane. Component of the cytochrome b6-f complex, which mediates electron transfer between photosystem II (PSII) and photosystem I (PSI), cyclic electron flow around PSI, and state transitions. This chain is Cytochrome b6, found in Prochlorococcus marinus (strain MIT 9211).